We begin with the raw amino-acid sequence, 738 residues long: MLHISRLGLFLALFAIVMHSVNLIKYTSDPLEAFKTVNRHNWSDEQREHFYDLRNLYTTFCQRNLSLDCFTQILTNVFSWNIRDLQCKSAVNLSPLQNLPRAETKIVLSSTAANKSIVASSFSLFYLLFATLSTYTADPPCVELLPFKILGTQLFDIKLTDESLQMAISKFSNSNLTRSLTPFTPEIFFNYTSFVYFLLYNTTSCIRSNDQYFEHSPKPINVTTSFGRAIVNFHSILTTTPSSTPSSTSASITSPHIPSTNTPTPEPSPVTKNFTELQTDTIKVTPNTPTITAQTTESIKKVVKRSDFPRPMYTPTDIPTLTIRRNATIKTEQNTENPTENPKSPPKPTNFENTTIRIPETFESTTVATNTTQKLESTTFATTIGIEEISDNIYSSPKNSIYLKSKSQQSTTKFTDTEHTTPILKFTTWQDAARTYMSHNTEVQNMTENFIKISLGETMGITPKEPTNPTQLLNVKNQTEYANETHSTEVQTVKTFKEDRFQRTTLKSSSEPPTVQTLSVTPKKKLPSNVTAKTEVQVTNNALPSSNSSHSITKVTEEPKQNRMSASTHGEINHTEIPRMTPILNAHTWEKSTTPQWPFTAETSLTTSSKSAILTWSNLLTTPKEPLTNTSLRSTNHITTQLTTSNRTQSAKLTKAHVSSQTTNIYPQTITERSTDVKKKSSTESREANKTLPGNDYRVTDKNSHNHPDNLTTKAYSTQNATHYTYNERHDLNNTDST.

Positions 1–23 (MLHISRLGLFLALFAIVMHSVNL) are cleaved as a signal peptide. N-linked (GlcNAc...) asparagine; by host glycosylation is found at Asn41, Asn64, Asn114, Asn175, Asn190, Asn201, and Asn221. Low complexity predominate over residues 240–263 (TPSSTPSSTSASITSPHIPSTNTP). The segment at 240-272 (TPSSTPSSTSASITSPHIPSTNTPTPEPSPVTK) is disordered. 2 N-linked (GlcNAc...) asparagine; by host glycosylation sites follow: Asn273 and Asn326. The span at 330 to 342 (KTEQNTENPTENP) shows a compositional bias: polar residues. The tract at residues 330-351 (KTEQNTENPTENPKSPPKPTNF) is disordered. 11 N-linked (GlcNAc...) asparagine; by host glycosylation sites follow: Asn353, Asn370, Asn445, Asn477, Asn483, Asn529, Asn547, Asn573, Asn629, Asn646, and Asn689. Over residues 541 to 554 (NALPSSNSSHSITK) the composition is skewed to polar residues. Positions 541 to 568 (NALPSSNSSHSITKVTEEPKQNRMSAST) are disordered. The interval 667-712 (PQTITERSTDVKKKSSTESREANKTLPGNDYRVTDKNSHNHPDNLT) is disordered. Composition is skewed to basic and acidic residues over residues 673 to 689 (RSTDVKKKSSTESREAN) and 698 to 708 (RVTDKNSHNHP). N-linked (GlcNAc...) asparagine; by host glycans are attached at residues Asn710, Asn720, and Asn733.

This sequence belongs to the herpesviridae U47 family. Part of a gH-gL-gO complex. 120 kDa Glycoprotein O: A shorter mature protein, gO-80K, is produced probably by proteolytic cleavage. Post-translationally, 120 kDa Glycoprotein O: Modified with high mannose-oligosaccharides. In terms of processing, N-glycosylated with complex glycans.

The protein localises to the virion. The protein resides in the host cell membrane. The protein is 130 kDa Glycoprotein O (U47) of Human herpesvirus 6B (strain Z29) (HHV-6 variant B).